A 490-amino-acid polypeptide reads, in one-letter code: Protein twist (490 aa).

Disordered stretches follow at residues 48-72 (QLQH…QHAQ), 96-165 (PSNE…TGGS), and 244-264 (QQQQ…HAQM). Residues 54 to 68 (QHLHSHQHHQQHHQQ) show a composition bias toward basic residues. Composition is skewed to low complexity over residues 102 to 134 (STSS…NPSG) and 244 to 263 (QQQQ…SHAQ). Residues serine 325 and serine 328 each carry the phosphoserine modification. The interval 330–361 (LDGSDAGGKAFRKPRRRLKRKPSKTEETDEFS) is disordered. Residues 339–351 (AFRKPRRRLKRKP) show a composition bias toward basic residues. The 52-residue stretch at 362 to 413 (NQRVMANVRERQRTQSLNDAFKSLQQIIPTLPSDKLSKIQTLKLATRYIDFL) folds into the bHLH domain.

In terms of assembly, efficient DNA binding requires dimerization with another bHLH protein. Homodimer. Interacts with akirin. As to expression, expressed in embryonic abdomen; a single cell ventrally, pairs of cells laterally and three cells dorsally in each hemisegment. In the thorax, there are patches of cells associated with the imaginal disks. During larval development, cells proliferate and, in the abdomen, they form ventral, lateral and dorsal clusters, which are the precursors of the adult abdominal muscles. In the thorax, they form populations of cells in the imaginal disks that correspond to the adepithelial cells.

Its subcellular location is the nucleus. Involved in the establishment and dorsoventral patterning of germ layers in the embryo. In Drosophila melanogaster (Fruit fly), this protein is Protein twist (twi).